The sequence spans 200 residues: Large ribosomal subunit protein uL4 (200 aa).

A disordered region spans residues G38–T72.

Belongs to the universal ribosomal protein uL4 family. Part of the 50S ribosomal subunit.

Functionally, one of the primary rRNA binding proteins, this protein initially binds near the 5'-end of the 23S rRNA. It is important during the early stages of 50S assembly. It makes multiple contacts with different domains of the 23S rRNA in the assembled 50S subunit and ribosome. Its function is as follows. Forms part of the polypeptide exit tunnel. This chain is Large ribosomal subunit protein uL4, found in Pseudomonas putida (strain ATCC 700007 / DSM 6899 / JCM 31910 / BCRC 17059 / LMG 24140 / F1).